The chain runs to 437 residues: O-methyltransferase 10 (437 aa).

Glycine 259, glutamate 282, asparagine 315, and methionine 316 together coordinate S-adenosyl-L-methionine. The active-site Proton acceptor is the histidine 335.

It belongs to the class I-like SAM-binding methyltransferase superfamily. Cation-independent O-methyltransferase family. COMT subfamily.

The enzyme catalyses (3,5-dichloro-2,4,6-trihydroxyphenyl)hexan-1-one + S-adenosyl-L-methionine = 1-(3,5-dichloro-2,6-dihydroxy-4-methoxyphenyl)hexan-1-one + S-adenosyl-L-homocysteine + H(+). This is O-methyltransferase 10 (omt10) from Dictyostelium discoideum (Social amoeba).